We begin with the raw amino-acid sequence, 156 residues long: Ribosomal RNA large subunit methyltransferase H (156 aa).

Residues Leu73, Gly104, and 123-128 (LSALTL) each bind S-adenosyl-L-methionine.

This sequence belongs to the RNA methyltransferase RlmH family. In terms of assembly, homodimer.

It localises to the cytoplasm. The enzyme catalyses pseudouridine(1915) in 23S rRNA + S-adenosyl-L-methionine = N(3)-methylpseudouridine(1915) in 23S rRNA + S-adenosyl-L-homocysteine + H(+). Functionally, specifically methylates the pseudouridine at position 1915 (m3Psi1915) in 23S rRNA. The polypeptide is Ribosomal RNA large subunit methyltransferase H (Shewanella frigidimarina (strain NCIMB 400)).